Reading from the N-terminus, the 555-residue chain is Formate--tetrahydrofolate ligase (555 aa).

65–72 (TPAGEGKT) is an ATP binding site.

It belongs to the formate--tetrahydrofolate ligase family.

It catalyses the reaction (6S)-5,6,7,8-tetrahydrofolate + formate + ATP = (6R)-10-formyltetrahydrofolate + ADP + phosphate. It participates in one-carbon metabolism; tetrahydrofolate interconversion. The protein is Formate--tetrahydrofolate ligase of Thermoanaerobacter pseudethanolicus (strain ATCC 33223 / 39E) (Clostridium thermohydrosulfuricum).